We begin with the raw amino-acid sequence, 808 residues long: Protein tortoise (808 aa).

Residues 43–78 (KDRKELYSLNNDSIKKKLNQLKDETNQLLKERGEEL) are a coiled coil. A disordered region spans residues 152–171 (LTSGGANKKKSPFLEDNNNK). Residues 694–733 (EDLDFQIEELELMIKNKKILEREIKAHNEKISKIIKDSRD) are a coiled coil.

The protein localises to the mitochondrion. Functionally, required for efficient chemotaxis. This is Protein tortoise (torA) from Dictyostelium discoideum (Social amoeba).